Consider the following 498-residue polypeptide: Glycerol kinase (498 aa).

Residue T13 participates in ADP binding. ATP-binding residues include T13, T14, and S15. Position 13 (T13) interacts with sn-glycerol 3-phosphate. An ADP-binding site is contributed by R17. 4 residues coordinate sn-glycerol 3-phosphate: R83, E84, Y135, and D244. R83, E84, Y135, D244, and Q245 together coordinate glycerol. Residues T266 and G309 each contribute to the ADP site. T266, G309, Q313, and G410 together coordinate ATP. ADP contacts are provided by G410 and N414.

It belongs to the FGGY kinase family. Homotetramer and homodimer (in equilibrium).

The enzyme catalyses glycerol + ATP = sn-glycerol 3-phosphate + ADP + H(+). It functions in the pathway polyol metabolism; glycerol degradation via glycerol kinase pathway; sn-glycerol 3-phosphate from glycerol: step 1/1. With respect to regulation, activated by phosphorylation and inhibited by fructose 1,6-bisphosphate (FBP). In terms of biological role, key enzyme in the regulation of glycerol uptake and metabolism. Catalyzes the phosphorylation of glycerol to yield sn-glycerol 3-phosphate. The protein is Glycerol kinase of Symbiobacterium thermophilum (strain DSM 24528 / JCM 14929 / IAM 14863 / T).